Here is a 157-residue protein sequence, read N- to C-terminus: Ribosomal RNA large subunit methyltransferase H (157 aa).

Residues Leu73, Gly105, and 124 to 129 (LSLMTF) each bind S-adenosyl-L-methionine.

It belongs to the RNA methyltransferase RlmH family. Homodimer.

Its subcellular location is the cytoplasm. It catalyses the reaction pseudouridine(1915) in 23S rRNA + S-adenosyl-L-methionine = N(3)-methylpseudouridine(1915) in 23S rRNA + S-adenosyl-L-homocysteine + H(+). Specifically methylates the pseudouridine at position 1915 (m3Psi1915) in 23S rRNA. This Flavobacterium johnsoniae (strain ATCC 17061 / DSM 2064 / JCM 8514 / BCRC 14874 / CCUG 350202 / NBRC 14942 / NCIMB 11054 / UW101) (Cytophaga johnsonae) protein is Ribosomal RNA large subunit methyltransferase H.